A 555-amino-acid chain; its full sequence is 4-coumarate--CoA ligase-like 9 (555 aa).

Ser-200, Ser-201, Gly-202, Thr-203, Thr-204, and Lys-208 together coordinate ATP. Tyr-248 lines the (E)-4-coumaroyl-AMP pocket. Arg-269 contributes to the CoA binding site. The segment at 271-342 (DLRTFLRALV…RKFPGVQVEE (72 aa)) is SBD1. Ala-320 contributes to the (E)-4-coumaroyl-AMP binding site. Residues Glu-342, Ala-343, Thr-347, Asp-431, and Arg-446 each coordinate ATP. (E)-4-coumaroyl-AMP contacts are provided by Ala-343 and Thr-347. The interval 343–410 (AYGLTEHSCI…VRSQSVMQGY (68 aa)) is SBD2. Positions 448 and 452 each coordinate (E)-4-coumaroyl-AMP. Residues Lys-454 and Gly-455 each coordinate CoA. Lys-537 contacts ATP.

It belongs to the ATP-dependent AMP-binding enzyme family. In terms of assembly, interacts with STS1. Requires Mg(2+) as cofactor.

It carries out the reaction (E)-4-coumarate + ATP + CoA = (E)-4-coumaroyl-CoA + AMP + diphosphate. The catalysed reaction is (E)-4-coumarate + ATP + H(+) = (E)-4-coumaroyl-AMP + diphosphate. The enzyme catalyses (E)-4-coumaroyl-AMP + CoA = (E)-4-coumaroyl-CoA + AMP + H(+). Its function is as follows. Carboxylate--CoA ligase that may use 4-coumarate as substrate. Follows a two-step reaction mechanism, wherein the carboxylate substrate first undergoes adenylation by ATP, followed by a thioesterification in the presence of CoA to yield the final CoA thioester. In Oryza sativa subsp. japonica (Rice), this protein is 4-coumarate--CoA ligase-like 9 (4CLL9).